A 319-amino-acid chain; its full sequence is MKTETPSVKIVAITADEAGQRIDNFLRTQLKGVPKSMIYRILRKGEVRVNKKRIKPEYKLEAGDEVRIPPVRVAEREEEAVSPHLQKVAALADVILYEDDHILVLNKPSGTAVHGGSGLSFGVIEGLRALRPEARFLELVHRLDRDTSGVLLVAKKRSALRSLHEQLREKGMQKDYLALVRGQWQSHVKSVQAPLLKNILQSGERIVRVSQEGKPSETRFKVEERYAFATLVRCSPVTGRTHQIRVHTQYAGHPIAFDDRYGDREFDRQLTEAGTGLNRLFLHAAALKFTHPGTGEVMRIEAPMDDGLKRCLQKLRNAR.

The S4 RNA-binding domain maps to 20–83; it reads QRIDNFLRTQ…AEREEEAVSP (64 aa). Residue Asp-144 is part of the active site.

Belongs to the pseudouridine synthase RluA family.

The catalysed reaction is uridine(955/2504/2580) in 23S rRNA = pseudouridine(955/2504/2580) in 23S rRNA. Its function is as follows. Responsible for synthesis of pseudouridine from uracil at positions 955, 2504 and 2580 in 23S ribosomal RNA. The chain is Ribosomal large subunit pseudouridine synthase C (rluC) from Escherichia coli O157:H7.